Here is a 211-residue protein sequence, read N- to C-terminus: Arginine exporter protein ArgO (211 aa).

A run of 6 helical transmembrane segments spans residues 1–21 (MFTY…PLGP), 37–57 (LMIA…GIFG), 68–88 (LLAI…FGAL), 111–131 (IIIT…DTFV), 147–167 (WFAL…ALLA), and 182–202 (IINI…AKEG).

It belongs to the LysE/ArgO transporter (TC 2.A.75) family.

Its subcellular location is the cell inner membrane. It catalyses the reaction L-arginine(in) = L-arginine(out). Involved in the export of arginine. Important to control the intracellular level of arginine and the correct balance between arginine and lysine. The protein is Arginine exporter protein ArgO of Klebsiella pneumoniae (strain 342).